The following is a 225-amino-acid chain: DNA-binding response regulator MtrA (225 aa).

The Response regulatory domain occupies 4–117 (RILVVDDDAS…ELVARVRARL (114 aa)). D53 carries the post-translational modification 4-aspartylphosphate. A DNA-binding region (ompR/PhoB-type) is located at residues 125 to 224 (AEMLSIADVE…VRGVGYKAGP (100 aa)).

In terms of processing, phosphorylated by MtrB.

Functionally, member of the two-component regulatory system MtrA/MtrB. The chain is DNA-binding response regulator MtrA (mtrA) from Mycolicibacterium paratuberculosis (strain ATCC BAA-968 / K-10) (Mycobacterium paratuberculosis).